The sequence spans 848 residues: DNA mismatch repair protein MutS (848 aa).

605–612 (GPNMAGKS) contacts ATP.

Belongs to the DNA mismatch repair MutS family.

This protein is involved in the repair of mismatches in DNA. It is possible that it carries out the mismatch recognition step. This protein has a weak ATPase activity. The protein is DNA mismatch repair protein MutS of Leptospira interrogans serogroup Icterohaemorrhagiae serovar Lai (strain 56601).